A 78-amino-acid chain; its full sequence is uncharacterized protein (78 aa).

Residues 20-78 (LQDLFPPHFGNEEADEDDEDGDKYGDDDGEFYGDNDGDNDGDNDGVNDGVGDGPPSTLL) form a disordered region. Over residues 31-64 (EEADEDDEDGDKYGDDDGEFYGDNDGDNDGDNDG) the composition is skewed to acidic residues.

This is an uncharacterized protein from Dictyostelium discoideum (Social amoeba).